Here is a 293-residue protein sequence, read N- to C-terminus: tRNA pseudouridine synthase B (293 aa).

Residue D40 is the Nucleophile of the active site.

This sequence belongs to the pseudouridine synthase TruB family. Type 1 subfamily.

The enzyme catalyses uridine(55) in tRNA = pseudouridine(55) in tRNA. In terms of biological role, responsible for synthesis of pseudouridine from uracil-55 in the psi GC loop of transfer RNAs. This Rickettsia akari (strain Hartford) protein is tRNA pseudouridine synthase B.